Reading from the N-terminus, the 124-residue chain is Holo-[acyl-carrier-protein] synthase (124 aa).

Positions 8 and 58 each coordinate Mg(2+).

Belongs to the P-Pant transferase superfamily. AcpS family. Mg(2+) serves as cofactor.

It localises to the cytoplasm. It carries out the reaction apo-[ACP] + CoA = holo-[ACP] + adenosine 3',5'-bisphosphate + H(+). Its function is as follows. Transfers the 4'-phosphopantetheine moiety from coenzyme A to a Ser of acyl-carrier-protein. This Lacticaseibacillus casei (strain BL23) (Lactobacillus casei) protein is Holo-[acyl-carrier-protein] synthase.